The chain runs to 63 residues: H/ACA ribonucleoprotein complex subunit 3-like protein (63 aa).

The disordered stretch occupies residues 18-40; the sequence is KMDPEGKPTLSAHPARFSPDDKY.

Belongs to the NOP10 family. Component of the small nucleolar ribonucleoprotein particles containing H/ACA-type snoRNAs (H/ACA snoRNPs).

The protein localises to the nucleus. The protein resides in the nucleolus. Its function is as follows. Required for ribosome biogenesis. Part of a complex which catalyzes pseudouridylation of rRNA. This involves the isomerization of uridine such that the ribose is subsequently attached to C5, instead of the normal N1. Pseudouridine ('psi') residues may serve to stabilize the conformation of rRNAs. This is H/ACA ribonucleoprotein complex subunit 3-like protein from Trypanosoma cruzi.